A 553-amino-acid polypeptide reads, in one-letter code: PE cleavage protein A (553 aa).

The PE domain maps to 1–92; the sequence is MSLLVVAPEW…SAGSYSAAEA (92 aa). Asp-293 is a catalytic residue.

It belongs to the mycobacterial PE family. PGRS subfamily. Undergoes auto-proteolytic processing.

The protein localises to the secreted. The protein resides in the cell surface. Its function is as follows. Aspartic protease that processes the lipase LipY and other PE_PGRS proteins. Can also cleave itself. Cleaves LipY both inside the PE domain, before amino acid 98, and after amino acids 136 and 149. Involved in virulence. This Mycobacterium marinum (strain ATCC BAA-535 / M) protein is PE cleavage protein A.